Consider the following 397-residue polypeptide: Elongation factor Tu (397 aa).

Residues 10–207 (KPHVNVGTIG…TLDTYIPEPE (198 aa)) enclose the tr-type G domain. The interval 19–26 (GHVDHGKT) is G1. 19–26 (GHVDHGKT) lines the GTP pocket. Threonine 26 provides a ligand contact to Mg(2+). The segment at 60-64 (GITIN) is G2. The segment at 81–84 (DCPG) is G3. GTP-binding positions include 81-85 (DCPGH) and 136-139 (NKAD). The segment at 136 to 139 (NKAD) is G4. Residues 174–176 (SAL) form a G5 region.

Belongs to the TRAFAC class translation factor GTPase superfamily. Classic translation factor GTPase family. EF-Tu/EF-1A subfamily. Monomer.

The protein localises to the cytoplasm. It carries out the reaction GTP + H2O = GDP + phosphate + H(+). GTP hydrolase that promotes the GTP-dependent binding of aminoacyl-tRNA to the A-site of ribosomes during protein biosynthesis. The protein is Elongation factor Tu of Pseudomonas fluorescens (strain ATCC BAA-477 / NRRL B-23932 / Pf-5).